Here is a 375-residue protein sequence, read N- to C-terminus: Cytochrome P450 monooxygenase ACRTS1 (375 aa).

Residue C321 coordinates heme.

This sequence belongs to the cytochrome P450 family. Heme serves as cofactor.

It participates in mycotoxin biosynthesis. Its function is as follows. Cytochrome P450 monooxygenase; part of the gene cluster that mediates the biosynthesis of the host-selective toxins (HSTs) ACR-toxins responsible for brown spot of rough lemon disease by the rough lemon pathotype. ACR-toxins cause uncoupling of mitochondrial oxidative-phosphorylation similar to that of classic protonophore. The structure of the major form of ACR-toxin (ACR-toxin I) consists of an alpha-dihydropyrone ring in a 19-carbon polyalcohol, a typical polyketide structure. Minor toxins were characterized as having a pyrone ring with polyalcohol side chains different in length and showing weaker toxicity. The highly reducing polyketide synthase ACRTS2 has all necessary enzymatic domains for multiple cycles of condensation and beta-keto processing. The cytochrome P450 monooxygenase ACRTS1 has also been shown to be essential for ACR-toxin biosynthesis, however its exact role in the pathway has not been elucidated yet. The protein is Cytochrome P450 monooxygenase ACRTS1 of Alternaria alternata (Alternaria rot fungus).